The following is a 554-amino-acid chain: uncharacterized protein (554 aa).

A disordered region spans residues 1–25; it reads MSSSIPPRLYDMSPTESKKQEDVSE. Ser-13 is modified (phosphoserine). 6 helical membrane-spanning segments follow: residues 82–102, 120–140, 149–169, 171–191, 210–230, and 253–273; these read FFVA…TSLI, APYL…VWSL, WAFN…GASP, FASI…NLPV, VMSF…WGLI, and FLFT…LVSV. Ser-334 carries the phosphoserine modification. A run of 6 helical transmembrane segments spans residues 364-384, 412-432, 437-457, 462-482, 497-517, and 525-545; these read LAIS…AFPL, SLIV…LVEF, KGTL…STTA, AYLG…GVLY, AVGL…VIAM, and APIF…VFFP.

The protein belongs to the major facilitator superfamily.

Its subcellular location is the endoplasmic reticulum. It localises to the membrane. This is an uncharacterized protein from Schizosaccharomyces pombe (strain 972 / ATCC 24843) (Fission yeast).